Consider the following 165-residue polypeptide: UPF0303 protein Bamb_1459 (165 aa).

This sequence belongs to the UPF0303 family.

The chain is UPF0303 protein Bamb_1459 from Burkholderia ambifaria (strain ATCC BAA-244 / DSM 16087 / CCUG 44356 / LMG 19182 / AMMD) (Burkholderia cepacia (strain AMMD)).